A 143-amino-acid polypeptide reads, in one-letter code: Small ribosomal subunit protein uS12 (143 aa).

Over residues 1–20 (MGKPRGLRTARKLKNHRREQ) the composition is skewed to basic residues. A disordered region spans residues 1–28 (MGKPRGLRTARKLKNHRREQRWHDKDYK). Pro-62 is modified (hydroxyproline).

The protein belongs to the universal ribosomal protein uS12 family. As to quaternary structure, component of the 40S small ribosomal subunit.

The protein resides in the cytoplasm. It localises to the cytosol. The protein localises to the rough endoplasmic reticulum. In Lumbricus rubellus (Humus earthworm), this protein is Small ribosomal subunit protein uS12 (RPS23).